A 315-amino-acid chain; its full sequence is Polyprenyl transferase mpaA (315 aa).

8 helical membrane-spanning segments follow: residues 40–60, 84–103, 118–135, 143–163, 174–194, 224–244, 248–268, and 279–299; these read IEFI…LCGA, LASG…GQYF, IWSL…YPYL, VFVY…ITGW, GDII…CVYF, LFLA…ISTI, WLWV…IAQF, and IHWD…VEVG.

This sequence belongs to the UbiA prenyltransferase family. It depends on Mg(2+) as a cofactor.

It localises to the golgi apparatus membrane. It carries out the reaction 5,7-dihydroxy-4-methylphthalide + (2E,6E)-farnesyl diphosphate = 4-farnesyl-3,5-dihydroxy-6-methylphthalide + diphosphate. It participates in secondary metabolite biosynthesis; terpenoid biosynthesis. Its function is as follows. Polyprenyl transferase; part of the gene cluster that mediates the biosynthesis of mycophenolic acid (MPA), the first isolated antibiotic natural product in the world obtained from a culture of Penicillium brevicompactum in 1893. MpaA is a Golgi apparatus-associated enzyme that catalyzes the prenylation of 5,7-dihydroxy-4,6-dimethylphthalide (DHMP) to yield farnesyl-DHMP (FDHMP). The first step of the pathway is the synthesis of 5-methylorsellinic acid (5MOA) by the cytosolic polyketide synthase mpaC. 5MOA is then converted to the phthalide compound 5,7-dihydroxy-4,6-dimethylphthalide (DHMP) by the endoplasmic reticulum-bound cytochrome P450 monooxygenase mpaDE. MpaDE first catalyzes hydroxylation of 5-MOA to 4,6-dihydroxy-2-(hydroxymethyl)-3-methylbenzoic acid (DHMB). MpaDE then acts as a lactone synthase that catalyzes the ring closure to convert DHMB into DHMP. The next step is the prenylation of DHMP by the Golgi apparatus-associated prenyltransferase mpaA to yield farnesyl-DHMP (FDHMP). The ER-bound oxygenase mpaB then mediates the oxidative cleavage the C19-C20 double bond in FDHMP to yield FDHMP-3C via a mycophenolic aldehyde intermediate. The O-methyltransferase mpaG catalyzes the methylation of FDHMP-3C to yield MFDHMP-3C. After the cytosolic methylation of FDHMP-3C, MFDHMP-3C enters into peroxisomes probably via free diffusion due to its low molecular weight. Upon a peroxisomal CoA ligation reaction, catalyzed by a beta-oxidation component enzyme acyl-CoA ligase ACL891, MFDHMP-3C-CoA would then be restricted to peroxisomes for the following beta-oxidation pathway steps. The peroxisomal beta-oxidation machinery than converts MFDHMP-3C-CoA into MPA_CoA, via a beta-oxidation chain-shortening process. Finally mpaH acts as a peroxisomal acyl-CoA hydrolase with high substrate specificity toward MPA-CoA to release the final product MPA. This Penicillium brevicompactum protein is Polyprenyl transferase mpaA.